Reading from the N-terminus, the 217-residue chain is Nucleolar protein 12 (217 aa).

Residues Gly34–Gln98 are a coiled coil. Residues Leu122–Glu217 are disordered. Positions Gly130–Ser141 are enriched in acidic residues. 2 stretches are compositionally biased toward basic residues: residues Ala172–Arg184 and Lys201–Glu217.

This sequence belongs to the RRP17 family. Interacts with KIAA1191. As to expression, expressed in brain, lung, spleen, kidney and heart.

It is found in the nucleus. It localises to the nucleolus. Its subcellular location is the cytoplasm. Its function is as follows. Multifunctional RNA binding protein that plays a role in RNA metabolism and DNA maintenance. Participates in the resolution of DNA stress and the maintenance of genome integrity by localizing to sites of DNA insults. Also plays a role in proper nucleolar organization by limiting nucleolar size and regulating nucleolar number. Mechanistically, regulates the nucleolar levels of fibrillarin and nucleolin, two key players in pre-rRNA processing and ribosome assembly. In Mus musculus (Mouse), this protein is Nucleolar protein 12 (Nol12).